The following is a 76-amino-acid chain: Small ribosomal subunit protein uS17 (76 aa).

This sequence belongs to the universal ribosomal protein uS17 family. As to quaternary structure, part of the 30S ribosomal subunit.

One of the primary rRNA binding proteins, it binds specifically to the 5'-end of 16S ribosomal RNA. In Ruegeria sp. (strain TM1040) (Silicibacter sp.), this protein is Small ribosomal subunit protein uS17.